We begin with the raw amino-acid sequence, 543 residues long: Serendipity locus protein alpha (543 aa).

Its subcellular location is the cytoplasm. The protein localises to the cell membrane. In terms of biological role, required for the cellularization of the syncytial blastoderm embryo. Involved in the localization of the actin filaments just prior to and during plasma membrane invagination. Sry-alpha together with nullo and bnk may provide auxiliary functions, by acting both to stabilize a large and dynamic microfilament structure and regulate its functions. This Drosophila subobscura (Fruit fly) protein is Serendipity locus protein alpha (Sry-alpha).